Here is a 139-residue protein sequence, read N- to C-terminus: Actin-depolymerizing factor 1 (139 aa).

In terms of domain architecture, ADF-H spans 5-139; the sequence is SSGLAVNDEC…SLDIVRSRTN (135 aa).

Belongs to the actin-binding proteins ADF family. As to expression, expressed in pollen.

Functionally, actin-depolymerizing protein. Severs actin filaments (F-actin) and binds to actin monomers. In Zea mays (Maize), this protein is Actin-depolymerizing factor 1 (ADF1).